The primary structure comprises 333 residues: Taste receptor type 2 member 38 (333 aa).

Residues 1–17 (MLTLTRICTVSYEVRST) are Extracellular-facing. Residues 18–38 (FLFISVLEFAVGFLTNAFIFL) traverse the membrane as a helical segment. Residues 39-55 (VNFWDVVKRQPLSNSDC) are Cytoplasmic-facing. A helical transmembrane segment spans residues 56 to 76 (VLLCLSISRLFLHGLLFLSAI). The Extracellular segment spans residues 77–94 (QLTHFQKLSEPLNHSYHA). A helical membrane pass occupies residues 95-115 (IIMLWMIANQANLWLATCLSL). The Cytoplasmic portion of the chain corresponds to 116 to 142 (LYCSKLIRSSHTFLICLASWVSRKICQ). A helical membrane pass occupies residues 143-163 (MLLGIILCSCICTVLCVWCYF). Topologically, residues 164–190 (SRPHFTVTTVLFTNNNTRLNWQIKDLN) are extracellular. Residue Asn-178 is glycosylated (N-linked (GlcNAc...) asparagine). Residues 191–211 (LFYSFLFCYLWSVPPFLLFLV) traverse the membrane as a helical segment. The Cytoplasmic segment spans residues 212–251 (SSGMLTVSLGRHMRTMKVYTRDFRDPSLEAHIKALKSLVS). A helical transmembrane segment spans residues 252–272 (FFCFFVISSCAAFISVPLLIL). Residues 273 to 276 (WRDK) are Extracellular-facing. A helical transmembrane segment spans residues 277 to 297 (IGVMVCVGIMAACPSGHAAIL). Over 298–333 (ISGNAKLRRAVTTILLWAQSSLKVRADHKADSRTLC) the chain is Cytoplasmic.

It belongs to the G-protein coupled receptor T2R family.

The protein resides in the membrane. Its function is as follows. Receptor that may play a role in the perception of bitterness and is gustducin-linked. May play a role in sensing the chemical composition of the gastrointestinal content. The activity of this receptor may stimulate alpha gustducin, mediate PLC-beta-2 activation and lead to the gating of TRPM5. This is Taste receptor type 2 member 38 (TAS2R38) from Hylobates klossii (Kloss's gibbon).